The chain runs to 449 residues: 3-phosphoshikimate 1-carboxyvinyltransferase (449 aa).

The interval 1–23 is disordered; that stretch reads MSHSASPKPATARRSEALTGEIR. 3-phosphoshikimate is bound by residues Lys-28, Ser-29, and Arg-33. Lys-28 lines the phosphoenolpyruvate pocket. Residues Gly-100 and Arg-128 each coordinate phosphoenolpyruvate. 3-phosphoshikimate contacts are provided by Ser-173, Gln-175, Asp-326, and Lys-353. Residue Gln-175 participates in phosphoenolpyruvate binding. The Proton acceptor role is filled by Asp-326. Phosphoenolpyruvate contacts are provided by Arg-357 and Arg-402.

The protein belongs to the EPSP synthase family. In terms of assembly, monomer.

Its subcellular location is the cytoplasm. The enzyme catalyses 3-phosphoshikimate + phosphoenolpyruvate = 5-O-(1-carboxyvinyl)-3-phosphoshikimate + phosphate. The protein operates within metabolic intermediate biosynthesis; chorismate biosynthesis; chorismate from D-erythrose 4-phosphate and phosphoenolpyruvate: step 6/7. Functionally, catalyzes the transfer of the enolpyruvyl moiety of phosphoenolpyruvate (PEP) to the 5-hydroxyl of shikimate-3-phosphate (S3P) to produce enolpyruvyl shikimate-3-phosphate and inorganic phosphate. The chain is 3-phosphoshikimate 1-carboxyvinyltransferase from Pseudomonas sp. (strain PG2982).